The primary structure comprises 148 residues: HTH-type transcriptional regulator Ptr1 (148 aa).

The HTH asnC-type domain occupies 2-63 (LDRIDLKILR…SINPKNLGFE (62 aa)). A DNA-binding region (H-T-H motif) is located at residues 21–40 (FREIGRELGISEGTVRNRVK).

In terms of assembly, homodimer.

In terms of biological role, participates in positive as well as negative regulation of transcription. Binds to its own promoter. This Methanocaldococcus jannaschii (strain ATCC 43067 / DSM 2661 / JAL-1 / JCM 10045 / NBRC 100440) (Methanococcus jannaschii) protein is HTH-type transcriptional regulator Ptr1 (ptr1).